Consider the following 759-residue polypeptide: ARF GTPase-activating protein GIT2 (759 aa).

An Arf-GAP domain is found at 1-124 (MSKRLRSSEV…AFVHRLPCRD (124 aa)). A C4-type zinc finger spans residues 11–34 (CADCSGPDPSWASVNRGTFLCDEC). ANK repeat units lie at residues 132–161 (DLSKQLHSSVRTGNLETCLRLLSLGAQANF), 166–195 (KGNTPLHVASKAGQILQAELLAVYGADPGT), and 199–228 (SGKTPVDYARQGGHHELAERLVEIQYELTD). Residues 379–422 (QHSVESQDNDQPDYDSVASDEDTDLETTASKTNRQKSLDSDLSD) are disordered. The span at 385–403 (QDNDQPDYDSVASDEDTDL) shows a compositional bias: acidic residues. A phosphoserine mark is found at Ser-394 and Ser-397. A Phosphothreonine modification is found at Thr-401. Phosphoserine occurs at positions 415, 418, and 421. Residues 437 to 478 (LVASEAKIQQLMKVNNNLSDELRIMQKKLQTLQSENSNLRKQ) adopt a coiled-coil conformation. The segment covering 480–499 (TTNVYQVQTGSEYTDTSNHS) has biased composition (polar residues). 2 disordered regions span residues 480–538 (TTNV…EESR) and 554–643 (VTSS…TEDV). Phosphotyrosine is present on Tyr-484. A compositionally biased stretch (low complexity) spans 555–569 (TSSSSLPSFPSTLSW). Phosphoserine is present on residues Ser-559, Ser-562, and Ser-570. Residues 570-583 (SRDESARRASRLEK) show a composition bias toward basic and acidic residues. Polar residues predominate over residues 584 to 597 (QNSTPESDYDNTPN). Thr-587 carries the phosphothreonine modification. Ser-614 bears the Phosphoserine mark.

May form heterooligomers with GIT1. Directly interacts with protein Piccolo/PCLO. Interacts with PPFIA1 and PPFIA2. Interacts with ARHGEF7. Identified in a complex with ARHGEF6 and BIN2. Interacts with PAK3. Interacts with PXN/paxillin. Interacts with TGFB1I1. Forms a complex with EFNB1 and GRB4/NCK2.

Functionally, GTPase-activating protein for ADP ribosylation factor family members, including ARF1. The sequence is that of ARF GTPase-activating protein GIT2 (GIT2) from Homo sapiens (Human).